Here is a 244-residue protein sequence, read N- to C-terminus: 14-3-3 protein beta/alpha-1 (244 aa).

Position 1 is an N-acetylmethionine (methionine 1).

This sequence belongs to the 14-3-3 family. As to quaternary structure, homodimer, and heterodimer with other family members. In terms of tissue distribution, expressed in brain, gill, heart, intestine, kidney, liver, ovary, skin, spleen and testis.

Its subcellular location is the cytoplasm. In terms of biological role, adapter protein implicated in the regulation of a large spectrum of both general and specialized signaling pathways. Binds to a large number of partners, usually by recognition of a phosphoserine or phosphothreonine motif. Binding generally results in the modulation of the activity of the binding partner. The sequence is that of 14-3-3 protein beta/alpha-1 from Oncorhynchus mykiss (Rainbow trout).